The chain runs to 510 residues: UDP-N-acetylmuramoyl-tripeptide--D-alanyl-D-alanine ligase (510 aa).

Residue 136-142 (GSSGKTS) coordinates ATP.

The protein belongs to the MurCDEF family. MurF subfamily.

It is found in the cytoplasm. The catalysed reaction is D-alanyl-D-alanine + UDP-N-acetyl-alpha-D-muramoyl-L-alanyl-gamma-D-glutamyl-meso-2,6-diaminopimelate + ATP = UDP-N-acetyl-alpha-D-muramoyl-L-alanyl-gamma-D-glutamyl-meso-2,6-diaminopimeloyl-D-alanyl-D-alanine + ADP + phosphate + H(+). It participates in cell wall biogenesis; peptidoglycan biosynthesis. Functionally, involved in cell wall formation. Catalyzes the final step in the synthesis of UDP-N-acetylmuramoyl-pentapeptide, the precursor of murein. In Mycobacterium bovis (strain ATCC BAA-935 / AF2122/97), this protein is UDP-N-acetylmuramoyl-tripeptide--D-alanyl-D-alanine ligase.